Consider the following 100-residue polypeptide: Small ribosomal subunit protein uS14c (100 aa).

This sequence belongs to the universal ribosomal protein uS14 family. Part of the 30S ribosomal subunit.

The protein resides in the plastid. Its subcellular location is the chloroplast. Functionally, binds 16S rRNA, required for the assembly of 30S particles. This Arabis hirsuta (Hairy rock-cress) protein is Small ribosomal subunit protein uS14c.